The sequence spans 180 residues: Large ribosomal subunit protein uL5 (180 aa).

This sequence belongs to the universal ribosomal protein uL5 family. As to quaternary structure, part of the 50S ribosomal subunit; part of the 5S rRNA/L5/L18/L25 subcomplex. Contacts the 5S rRNA and the P site tRNA. Forms a bridge to the 30S subunit in the 70S ribosome.

In terms of biological role, this is one of the proteins that bind and probably mediate the attachment of the 5S RNA into the large ribosomal subunit, where it forms part of the central protuberance. In the 70S ribosome it contacts protein S13 of the 30S subunit (bridge B1b), connecting the 2 subunits; this bridge is implicated in subunit movement. Contacts the P site tRNA; the 5S rRNA and some of its associated proteins might help stabilize positioning of ribosome-bound tRNAs. This Roseiflexus sp. (strain RS-1) protein is Large ribosomal subunit protein uL5.